Consider the following 84-residue polypeptide: Cell division topological specificity factor (84 aa).

The protein belongs to the MinE family.

Functionally, prevents the cell division inhibition by proteins MinC and MinD at internal division sites while permitting inhibition at polar sites. This ensures cell division at the proper site by restricting the formation of a division septum at the midpoint of the long axis of the cell. This Cupriavidus necator (strain ATCC 17699 / DSM 428 / KCTC 22496 / NCIMB 10442 / H16 / Stanier 337) (Ralstonia eutropha) protein is Cell division topological specificity factor.